We begin with the raw amino-acid sequence, 284 residues long: Two-pore potassium channel 4 (284 aa).

Residues 1–21 (MEEENLLNENLLHPNESSPEE) form a disordered region. Residues 1–31 (MEEENLLNENLLHPNESSPEETQVTTVSKSK) are Cytoplasmic-facing. A helical membrane pass occupies residues 32–52 (WTILVLAMILLLVYLTFGVCT). The segment at residues 70-89 (DAFYFSIVTFSTVGYGDIVP) is an intramembrane region (pore-forming). Residues 93–113 (TTKILTIVLVSTGVVFLDYLL) form a helical membrane-spanning segment. Residues 114-156 (NRVVSHVLSLQENAILDRINKTRNRAIRDHIAEDGKIRLKWKL) are Cytoplasmic-facing. A helical membrane pass occupies residues 157-177 (CLAFCAVGLCVGSGALFLHVF). Residues 184–203 (DSVYLSVISVTTVGYGDKTF) constitute an intramembrane region (pore-forming). Residues 211-231 (FAVFWLLLSTIAMATLFLYLA) traverse the membrane as a helical segment. Topologically, residues 232-284 (EMRIDRTTVMKLPPSESEFIVFKLRESGRISEDDIKQIVREFENLEEVPSSGS) are cytoplasmic.

This sequence belongs to the two pore domain potassium channel (TC 1.A.1.7) family. Homodimer. Predominantly expressed in pollen.

Its subcellular location is the cell membrane. Its function is as follows. Voltage-independent, instantaneously activating, potassium-selective plasma membrane ion channel. Open rectifier. Regulated by cytoplasmic pH and extra-cellular calcium. Has some permeability for Rb(+) and NH(4)(+), but none for Na(+) or Li(+). The chain is Two-pore potassium channel 4 (TPK4) from Arabidopsis thaliana (Mouse-ear cress).